A 182-amino-acid polypeptide reads, in one-letter code: UPF0690 protein C1orf52 homolog (182 aa).

The segment at 1–61 (MAAEEKDPLS…AEKRLPGPDE (61 aa)) is disordered. The segment covering 23–32 (SDEEDNSEPE) has biased composition (acidic residues). Residues 51 to 61 (KAEKRLPGPDE) show a composition bias toward basic and acidic residues. Thr67 is subject to Phosphothreonine. Position 132 is a phosphotyrosine (Tyr132). Residues 132–182 (YEDNGDDAPQNAKKARLLPEGEETVESDDEKDEHTSKKRKIELGEPTKKKK) form a disordered region. The span at 151-162 (EGEETVESDDEK) shows a compositional bias: acidic residues. Residue Ser158 is modified to Phosphoserine. Positions 172-182 (IELGEPTKKKK) are enriched in basic and acidic residues.

The protein belongs to the UPF0690 family.

The chain is UPF0690 protein C1orf52 homolog from Bos taurus (Bovine).